Consider the following 255-residue polypeptide: Thiazole synthase (255 aa).

Lys-96 (schiff-base intermediate with DXP) is an active-site residue. Residues Gly-157, Ala-183–Gly-184, and Asn-205–Thr-206 each bind 1-deoxy-D-xylulose 5-phosphate.

It belongs to the ThiG family. As to quaternary structure, homotetramer. Forms heterodimers with either ThiH or ThiS.

It localises to the cytoplasm. The enzyme catalyses [ThiS sulfur-carrier protein]-C-terminal-Gly-aminoethanethioate + 2-iminoacetate + 1-deoxy-D-xylulose 5-phosphate = [ThiS sulfur-carrier protein]-C-terminal Gly-Gly + 2-[(2R,5Z)-2-carboxy-4-methylthiazol-5(2H)-ylidene]ethyl phosphate + 2 H2O + H(+). It functions in the pathway cofactor biosynthesis; thiamine diphosphate biosynthesis. Its function is as follows. Catalyzes the rearrangement of 1-deoxy-D-xylulose 5-phosphate (DXP) to produce the thiazole phosphate moiety of thiamine. Sulfur is provided by the thiocarboxylate moiety of the carrier protein ThiS. In vitro, sulfur can be provided by H(2)S. This is Thiazole synthase from Bacillus licheniformis (strain ATCC 14580 / DSM 13 / JCM 2505 / CCUG 7422 / NBRC 12200 / NCIMB 9375 / NCTC 10341 / NRRL NRS-1264 / Gibson 46).